A 98-amino-acid polypeptide reads, in one-letter code: Integration host factor subunit beta (98 aa).

The protein belongs to the bacterial histone-like protein family. Heterodimer of an alpha and a beta chain.

Its function is as follows. This protein is one of the two subunits of integration host factor, a specific DNA-binding protein that functions in genetic recombination as well as in transcriptional and translational control. The chain is Integration host factor subunit beta from Pseudomonas syringae pv. tomato (strain ATCC BAA-871 / DC3000).